Reading from the N-terminus, the 459-residue chain is Cysteine--tRNA ligase (459 aa).

C29 serves as a coordination point for Zn(2+). A 'HIGH' region motif is present at residues 31–41 (MTVYDLCHLGH). Zn(2+)-binding residues include C213, H238, and E242. Residues 270 to 274 (KMSKS) carry the 'KMSKS' region motif. Residue K273 coordinates ATP.

This sequence belongs to the class-I aminoacyl-tRNA synthetase family. As to quaternary structure, monomer. Zn(2+) is required as a cofactor.

The protein localises to the cytoplasm. It carries out the reaction tRNA(Cys) + L-cysteine + ATP = L-cysteinyl-tRNA(Cys) + AMP + diphosphate. This chain is Cysteine--tRNA ligase, found in Albidiferax ferrireducens (strain ATCC BAA-621 / DSM 15236 / T118) (Rhodoferax ferrireducens).